A 267-amino-acid chain; its full sequence is 4-hydroxy-tetrahydrodipicolinate reductase (267 aa).

11-16 (GAAGRM) is an NAD(+) binding site. Residue Arg-39 participates in NADP(+) binding. NAD(+) is bound by residues 100 to 102 (GTT) and 126 to 129 (APNF). His-156 acts as the Proton donor/acceptor in catalysis. A (S)-2,3,4,5-tetrahydrodipicolinate-binding site is contributed by His-157. Residue Lys-160 is the Proton donor of the active site. 166–167 (GT) contributes to the (S)-2,3,4,5-tetrahydrodipicolinate binding site.

The protein belongs to the DapB family.

The protein localises to the cytoplasm. It catalyses the reaction (S)-2,3,4,5-tetrahydrodipicolinate + NAD(+) + H2O = (2S,4S)-4-hydroxy-2,3,4,5-tetrahydrodipicolinate + NADH + H(+). The enzyme catalyses (S)-2,3,4,5-tetrahydrodipicolinate + NADP(+) + H2O = (2S,4S)-4-hydroxy-2,3,4,5-tetrahydrodipicolinate + NADPH + H(+). It functions in the pathway amino-acid biosynthesis; L-lysine biosynthesis via DAP pathway; (S)-tetrahydrodipicolinate from L-aspartate: step 4/4. Functionally, catalyzes the conversion of 4-hydroxy-tetrahydrodipicolinate (HTPA) to tetrahydrodipicolinate. In Moorella thermoacetica (strain ATCC 39073 / JCM 9320), this protein is 4-hydroxy-tetrahydrodipicolinate reductase.